A 429-amino-acid polypeptide reads, in one-letter code: MNHSRSHALFSQAQNLMPGGVNSPVRAFKSVGGEPFFVARADGAYLFDVDGNRYIDYVGSWGPMIAGHNHPAVREAVERAIRDGLSFGAPCEAEVTMAETITRLVPSCEMVRMVNSGTEATLSAIRLARGATGRNRIVKFEGCYHGHGDSFLVKAGSGMLTLGVPTSPGVPAGLSELTATLSFNDFEGATALFDEIGAEVAAVIIEPVVGNANCIPPQAGYLQHLRTLCTRHGALLIFDEVMTGFRVALGGAQAHYGVTPDLTTFGKIIGGGMPVGAYGGGRDLMEQISPAGPIYQAGTLSGNPVAMAAGLAMLQLVQEPGFHARLSETTSLLCEGLEDAARAAGVAVTTNQVGGMFGLFFTDQIVENYAQATACDVTTFNRFFHAMLQQGVYLAPSAYEAGFVSSAHDEAVIEATLAAAREAFADVMR.

Lys-267 carries the post-translational modification N6-(pyridoxal phosphate)lysine.

The protein belongs to the class-III pyridoxal-phosphate-dependent aminotransferase family. HemL subfamily. In terms of assembly, homodimer. Pyridoxal 5'-phosphate serves as cofactor.

The protein resides in the cytoplasm. It catalyses the reaction (S)-4-amino-5-oxopentanoate = 5-aminolevulinate. The protein operates within porphyrin-containing compound metabolism; protoporphyrin-IX biosynthesis; 5-aminolevulinate from L-glutamyl-tRNA(Glu): step 2/2. This Xanthomonas campestris pv. campestris (strain 8004) protein is Glutamate-1-semialdehyde 2,1-aminomutase.